The sequence spans 242 residues: 3-deoxy-manno-octulosonate cytidylyltransferase (242 aa).

The protein belongs to the KdsB family.

It localises to the cytoplasm. The catalysed reaction is 3-deoxy-alpha-D-manno-oct-2-ulosonate + CTP = CMP-3-deoxy-beta-D-manno-octulosonate + diphosphate. It participates in nucleotide-sugar biosynthesis; CMP-3-deoxy-D-manno-octulosonate biosynthesis; CMP-3-deoxy-D-manno-octulosonate from 3-deoxy-D-manno-octulosonate and CTP: step 1/1. The protein operates within bacterial outer membrane biogenesis; lipopolysaccharide biosynthesis. In terms of biological role, activates KDO (a required 8-carbon sugar) for incorporation into bacterial lipopolysaccharide in Gram-negative bacteria. This is 3-deoxy-manno-octulosonate cytidylyltransferase from Anaeromyxobacter dehalogenans (strain 2CP-C).